A 146-amino-acid chain; its full sequence is Large ribosomal subunit protein uL15 (146 aa).

Positions 1–13 (MKLNELHPSEGSR) are enriched in basic and acidic residues. Residues 1–56 (MKLNELHPSEGSRHARKRVGRGTSSGFGKTSGRGQKGQHARSGGNTRLGFEGGQMP) are disordered. Residues 23 to 35 (TSSGFGKTSGRGQ) are compositionally biased toward gly residues.

The protein belongs to the universal ribosomal protein uL15 family. In terms of assembly, part of the 50S ribosomal subunit.

Binds to the 23S rRNA. This chain is Large ribosomal subunit protein uL15, found in Lactobacillus delbrueckii subsp. bulgaricus (strain ATCC 11842 / DSM 20081 / BCRC 10696 / JCM 1002 / NBRC 13953 / NCIMB 11778 / NCTC 12712 / WDCM 00102 / Lb 14).